The chain runs to 360 residues: Phospho-N-acetylmuramoyl-pentapeptide-transferase (360 aa).

10 helical membrane-spanning segments follow: residues 19 to 39 (LTYLTSRIILGALTALLLSIF), 73 to 93 (TMGGALIIFSITVSMLCWADL), 95 to 115 (SVYTWLALFVLLGFGAVGWTD), 136 to 156 (YLSLVALLTALWLYFLADTPI), 173 to 193 (GILFIPFVYLVLTGASNAVNL), 199 to 219 (GLAIMPVVLVSGGLCIFAYLS), 233 to 253 (IAGAGEMAIFCAAIAGAGLGF), 263 to 283 (VFMGDVGALSLGAALATVAVV), 288 to 308 (LAFAVMGGVFVAEALSVMIQV), and 338 to 358 (VTIRFWIITVVLVLVGLSTLK).

This sequence belongs to the glycosyltransferase 4 family. MraY subfamily. Requires Mg(2+) as cofactor.

Its subcellular location is the cell inner membrane. The catalysed reaction is UDP-N-acetyl-alpha-D-muramoyl-L-alanyl-gamma-D-glutamyl-meso-2,6-diaminopimeloyl-D-alanyl-D-alanine + di-trans,octa-cis-undecaprenyl phosphate = di-trans,octa-cis-undecaprenyl diphospho-N-acetyl-alpha-D-muramoyl-L-alanyl-D-glutamyl-meso-2,6-diaminopimeloyl-D-alanyl-D-alanine + UMP. It functions in the pathway cell wall biogenesis; peptidoglycan biosynthesis. Functionally, catalyzes the initial step of the lipid cycle reactions in the biosynthesis of the cell wall peptidoglycan: transfers peptidoglycan precursor phospho-MurNAc-pentapeptide from UDP-MurNAc-pentapeptide onto the lipid carrier undecaprenyl phosphate, yielding undecaprenyl-pyrophosphoryl-MurNAc-pentapeptide, known as lipid I. The protein is Phospho-N-acetylmuramoyl-pentapeptide-transferase of Dichelobacter nodosus (strain VCS1703A).